Here is a 145-residue protein sequence, read N- to C-terminus: Large ribosomal subunit protein uL14m (145 aa).

The transit peptide at 1–30 directs the protein to the mitochondrion; that stretch reads MAFFTGLWGPFTCVSRVLSHHCFSTTGSLS.

The protein belongs to the universal ribosomal protein uL14 family. In terms of assembly, component of the mitochondrial large ribosomal subunit (mt-LSU). Mature mammalian 55S mitochondrial ribosomes consist of a small (28S) and a large (39S) subunit. The 28S small subunit contains a 12S ribosomal RNA (12S mt-rRNA) and 30 different proteins. The 39S large subunit contains a 16S rRNA (16S mt-rRNA), a copy of mitochondrial valine transfer RNA (mt-tRNA(Val)), which plays an integral structural role, and 52 different proteins. Interacts with MALSU1.

Its subcellular location is the mitochondrion. Functionally, forms part of 2 intersubunit bridges in the assembled ribosome. Upon binding to MALSU1 intersubunit bridge formation is blocked, preventing ribosome formation and repressing translation. The sequence is that of Large ribosomal subunit protein uL14m (MRPL14) from Homo sapiens (Human).